Consider the following 122-residue polypeptide: Small ribosomal subunit protein uS12c (122 aa).

It belongs to the universal ribosomal protein uS12 family. Part of the 30S ribosomal subunit.

The protein localises to the plastid. It localises to the chloroplast. Its function is as follows. With S4 and S5 plays an important role in translational accuracy. Located at the interface of the 30S and 50S subunits. The sequence is that of Small ribosomal subunit protein uS12c (rps12) from Mesostigma viride (Green alga).